The following is a 357-amino-acid chain: Aspartate carbamoyltransferase catalytic subunit (357 aa).

Residues 1 to 15 show a composition bias toward polar residues; it reads MSNSIDSQSLPTVSP. The interval 1–21 is disordered; it reads MSNSIDSQSLPTVSPTDYARF. Carbamoyl phosphate is bound by residues R97 and T98. Position 125 (K125) interacts with L-aspartate. Carbamoyl phosphate-binding residues include R147, H177, and Q180. 2 residues coordinate L-aspartate: R211 and R266. Residues G307 and P308 each contribute to the carbamoyl phosphate site.

This sequence belongs to the aspartate/ornithine carbamoyltransferase superfamily. ATCase family. As to quaternary structure, heterododecamer (2C3:3R2) of six catalytic PyrB chains organized as two trimers (C3), and six regulatory PyrI chains organized as three dimers (R2).

The enzyme catalyses carbamoyl phosphate + L-aspartate = N-carbamoyl-L-aspartate + phosphate + H(+). It functions in the pathway pyrimidine metabolism; UMP biosynthesis via de novo pathway; (S)-dihydroorotate from bicarbonate: step 2/3. Its function is as follows. Catalyzes the condensation of carbamoyl phosphate and aspartate to form carbamoyl aspartate and inorganic phosphate, the committed step in the de novo pyrimidine nucleotide biosynthesis pathway. The sequence is that of Aspartate carbamoyltransferase catalytic subunit from Psychrobacter cryohalolentis (strain ATCC BAA-1226 / DSM 17306 / VKM B-2378 / K5).